We begin with the raw amino-acid sequence, 315 residues long: Homeobox-leucine zipper protein HAT3 (315 aa).

Residues 140–163 (SCSLGGGSDDEDGSGNGDDSSRKK) form a disordered region. A DNA-binding region (homeobox) is located at residues 159–218 (SSRKKLRLSKEQALVLEETFKEHSTLNPKQKMALAKQLNLRTRQVEVWFQNRRARTKLKQ). The tract at residues 226-247 (LKRCCENLTDENRRLQKEVSEL) is leucine-zipper. Residues 280–305 (SSSSVAPPVMNSSSPMGPMSPWAAMP) show a composition bias toward low complexity. The interval 280–315 (SSSSVAPPVMNSSSPMGPMSPWAAMPLRQRPAAGSH) is disordered.

The protein belongs to the HD-ZIP homeobox family. Class II subfamily.

Its subcellular location is the nucleus. Probable transcription factor. The polypeptide is Homeobox-leucine zipper protein HAT3 (HAT3) (Arabidopsis thaliana (Mouse-ear cress)).